The sequence spans 229 residues: uncharacterized protein (229 aa).

Residues 1 to 26 (MSRNDARYLRCTAALGAAFFACGAAA) form the signal peptide.

The protein belongs to the OmpW/AlkL family.

The protein resides in the cell outer membrane. This is an uncharacterized protein from Sinorhizobium fredii (strain NBRC 101917 / NGR234).